Consider the following 766-residue polypeptide: UPF0313 protein PP_4872 (766 aa).

The Radical SAM core domain occupies 371-649; it reads AYEMIRFSVN…KAFLRYHDPK (279 aa). [4Fe-4S] cluster contacts are provided by Cys385, Cys389, and Cys392. Residues 670–766 are disordered; sequence GKHQLIPLHQ…KKPRQPVIPR (97 aa). Over residues 723-735 the composition is skewed to basic and acidic residues; the sequence is KPWDKREKAKAEA.

This sequence belongs to the UPF0313 family. [4Fe-4S] cluster serves as cofactor.

The polypeptide is UPF0313 protein PP_4872 (Pseudomonas putida (strain ATCC 47054 / DSM 6125 / CFBP 8728 / NCIMB 11950 / KT2440)).